A 492-amino-acid polypeptide reads, in one-letter code: Endoglucanase 15 (492 aa).

The N-terminal stretch at 1 to 30 (MSCISSQCFITIKSICIVLLLSITCGAVSA) is a signal peptide. The active-site Nucleophile is aspartate 86. Catalysis depends on residues histidine 414, aspartate 466, and glutamate 475.

It belongs to the glycosyl hydrolase 9 (cellulase E) family.

It localises to the secreted. It carries out the reaction Endohydrolysis of (1-&gt;4)-beta-D-glucosidic linkages in cellulose, lichenin and cereal beta-D-glucans.. In Arabidopsis thaliana (Mouse-ear cress), this protein is Endoglucanase 15.